Reading from the N-terminus, the 134-residue chain is MKRKYRRLFVVIITLSIFAGSVVFVLGKLKNNVSFFYTPTELLSSSLINRPNIRIGGMVVKGTVQKYDDSIVFHITDLKNYIKVVYKGILPPLFSEGSWIVAKGKMVNGKFIASEILAKHDENYMPNKYKTNNL.

Residues Met-1–Arg-7 lie on the Cytoplasmic side of the membrane. A helical; Signal-anchor for type II membrane protein membrane pass occupies residues Leu-8 to Lys-28. At Leu-29–Leu-134 the chain is on the periplasmic side. Positions 120 and 124 each coordinate heme.

Belongs to the CcmE/CycJ family.

Its subcellular location is the cell inner membrane. In terms of biological role, heme chaperone required for the biogenesis of c-type cytochromes. Transiently binds heme delivered by CcmC and transfers the heme to apo-cytochromes in a process facilitated by CcmF and CcmH. The polypeptide is Cytochrome c-type biogenesis protein CcmE (Ehrlichia ruminantium (strain Gardel)).